The chain runs to 147 residues: Large ribosomal subunit protein uL13 (147 aa).

This sequence belongs to the universal ribosomal protein uL13 family. In terms of assembly, part of the 50S ribosomal subunit.

Functionally, this protein is one of the early assembly proteins of the 50S ribosomal subunit, although it is not seen to bind rRNA by itself. It is important during the early stages of 50S assembly. The protein is Large ribosomal subunit protein uL13 of Corynebacterium glutamicum (strain R).